A 404-amino-acid polypeptide reads, in one-letter code: Diphosphomevalonate decarboxylase mvd1 (404 aa).

(R)-5-diphosphomevalonate contacts are provided by residues 25–28, arginine 82, 161–166, and threonine 217; these read YWGK and SGSACR.

The protein belongs to the diphosphomevalonate decarboxylase family. As to quaternary structure, homodimer.

The enzyme catalyses (R)-5-diphosphomevalonate + ATP = isopentenyl diphosphate + ADP + phosphate + CO2. The protein operates within isoprenoid biosynthesis; isopentenyl diphosphate biosynthesis via mevalonate pathway; isopentenyl diphosphate from (R)-mevalonate: step 3/3. Its function is as follows. Diphosphomevalonate decarboxylase; part of the second module of ergosterol biosynthesis pathway that includes the middle steps of the pathway. Mvd1 converts diphosphomevalonate into isopentenyl diphosphate. The second module is carried out in the vacuole and involves the formation of farnesyl diphosphate, which is also an important intermediate in the biosynthesis of ubiquinone, dolichol, heme and prenylated proteins. Activity by the mevalonate kinase erg12 (AFUA_4G07780) first converts mevalonate into 5-phosphomevalonate. 5-phosphomevalonate is then further converted to 5-diphosphomevalonate by the phosphomevalonate kinase erg8 (AFUA_5G10680). The diphosphomevalonate decarboxylase mvd1 (AFUA_4G07130) then produces isopentenyl diphosphate. The isopentenyl-diphosphate delta-isomerase idi1 (AFUA_6G11160) then catalyzes the 1,3-allylic rearrangement of the homoallylic substrate isopentenyl (IPP) to its highly electrophilic allylic isomer, dimethylallyl diphosphate (DMAPP). Finally the farnesyl diphosphate synthase erg20 (AFUA_5G02450) catalyzes the sequential condensation of isopentenyl pyrophosphate with dimethylallyl pyrophosphate, and then with the resultant geranylpyrophosphate to the ultimate product farnesyl pyrophosphate. The polypeptide is Diphosphomevalonate decarboxylase mvd1 (Aspergillus fumigatus (strain ATCC MYA-4609 / CBS 101355 / FGSC A1100 / Af293) (Neosartorya fumigata)).